The following is a 129-amino-acid chain: Histone H2A.2 (129 aa).

Lys-5 carries the post-translational modification N6-acetyllysine. Gln-108 bears the N5-methylglutamine mark.

It belongs to the histone H2A family. In terms of assembly, the nucleosome is a histone octamer containing two molecules each of H2A, H2B, H3 and H4 assembled in one H3-H4 heterotetramer and two H2A-H2B heterodimers. The octamer wraps approximately 147 bp of DNA. Post-translationally, acetylated by ESA1 to form H2AK4ac.

It localises to the nucleus. It is found in the chromosome. Its function is as follows. Core component of nucleosome which plays a central role in DNA double strand break (DSB) repair. Nucleosomes wrap and compact DNA into chromatin, limiting DNA accessibility to the cellular machineries which require DNA as a template. Histones thereby play a central role in transcription regulation, DNA repair, DNA replication and chromosomal stability. DNA accessibility is regulated via a complex set of post-translational modifications of histones, also called histone code, and nucleosome remodeling. This chain is Histone H2A.2 (HTA2), found in Lodderomyces elongisporus (strain ATCC 11503 / CBS 2605 / JCM 1781 / NBRC 1676 / NRRL YB-4239) (Yeast).